Here is a 536-residue protein sequence, read N- to C-terminus: Formate--tetrahydrofolate ligase (536 aa).

51 to 58 (TAAGEGKT) lines the ATP pocket.

This sequence belongs to the formate--tetrahydrofolate ligase family.

The enzyme catalyses (6S)-5,6,7,8-tetrahydrofolate + formate + ATP = (6R)-10-formyltetrahydrofolate + ADP + phosphate. Its pathway is one-carbon metabolism; tetrahydrofolate interconversion. In Thermoplasma volcanium (strain ATCC 51530 / DSM 4299 / JCM 9571 / NBRC 15438 / GSS1), this protein is Formate--tetrahydrofolate ligase.